Reading from the N-terminus, the 266-residue chain is Zinc transporter ZupT (266 aa).

8 consecutive transmembrane segments (helical) span residues L8–V28, L36–I56, A71–D91, G123–F143, G152–V172, F185–L205, F209–I229, and L246–T266. N134 and E137 together coordinate Fe(2+). The Zn(2+) site is built by E137 and H162. Residues N163, E166, and E195 each coordinate Fe(2+). Residue E166 coordinates Zn(2+).

The protein belongs to the ZIP transporter (TC 2.A.5) family. ZupT subfamily.

The protein localises to the cell inner membrane. The enzyme catalyses Zn(2+)(in) = Zn(2+)(out). In terms of biological role, mediates zinc uptake. May also transport other divalent cations. The chain is Zinc transporter ZupT from Chlorobium luteolum (strain DSM 273 / BCRC 81028 / 2530) (Pelodictyon luteolum).